We begin with the raw amino-acid sequence, 1147 residues long: Cellulose synthase-like protein D3 (1147 aa).

Disordered stretches follow at residues 1–33 (MSTG…PAGQ) and 259–281 (KLGG…PFKP). Gly residues-rich tracts occupy residues 14-29 (GGVG…GPRG) and 262-272 (GDGGGGGGGGP). 2 consecutive transmembrane segments (helical) span residues 292–312 (VISP…FYLT) and 322–342 (ALWL…SWLL). Catalysis depends on residues Asp422 and Asp847. 6 helical membrane passes run 929 to 949 (IFLL…FFIV), 954 to 974 (IAFL…GILE), 1001 to 1021 (LYAV…SFTL), 1045 to 1065 (LLIP…FAFA), 1075 to 1095 (WGKF…LNPF), and 1108 to 1128 (TIVF…WVAI).

This sequence belongs to the glycosyltransferase 2 family. Plant cellulose synthase-like D subfamily.

The protein localises to the golgi apparatus membrane. Its function is as follows. Thought to be a Golgi-localized beta-glycan synthase that polymerize the backbones of noncellulosic polysaccharides (hemicelluloses) of plant cell wall. The protein is Cellulose synthase-like protein D3 (CSLD3) of Oryza sativa subsp. japonica (Rice).